We begin with the raw amino-acid sequence, 281 residues long: 2-dehydro-3-deoxyphosphooctonate aldolase (281 aa).

This sequence belongs to the KdsA family.

It is found in the cytoplasm. It catalyses the reaction D-arabinose 5-phosphate + phosphoenolpyruvate + H2O = 3-deoxy-alpha-D-manno-2-octulosonate-8-phosphate + phosphate. It participates in carbohydrate biosynthesis; 3-deoxy-D-manno-octulosonate biosynthesis; 3-deoxy-D-manno-octulosonate from D-ribulose 5-phosphate: step 2/3. It functions in the pathway bacterial outer membrane biogenesis; lipopolysaccharide biosynthesis. The chain is 2-dehydro-3-deoxyphosphooctonate aldolase from Marinobacter nauticus (strain ATCC 700491 / DSM 11845 / VT8) (Marinobacter aquaeolei).